The primary structure comprises 239 residues: MADS-box transcription factor 34 (239 aa).

The region spanning 1–61 (MGRGKVVLQR…GRLYQFSSSS (61 aa)) is the MADS-box domain. The region spanning 88–178 (MQNNYQEYVN…KRKLDEIDVE (91 aa)) is the K-box domain. The interval 179–208 (AAPPQPPWNGNCSNGHGGGGGVFSSEPPQP) is disordered.

As to expression, highly expressed in leaves and at low levels in roots and spikelets (rice flower).

It localises to the nucleus. In terms of biological role, probable transcription factor. The polypeptide is MADS-box transcription factor 34 (MADS34) (Oryza sativa subsp. japonica (Rice)).